A 23-amino-acid chain; its full sequence is Dahlein-4.1 (23 aa).

In terms of tissue distribution, expressed by the skin dorsal glands.

The protein localises to the secreted. Has no antimicrobial activity. The sequence is that of Dahlein-4.1 from Ranoidea dahlii (Dahl's aquatic frog).